Consider the following 670-residue polypeptide: Small ribosomal subunit protein mS39 (670 aa).

The transit peptide at 1–13 (MAAPCVRLGSVRC) directs the protein to the mitochondrion. PPR repeat units lie at residues 129–163 (VEGVSEEALKERIQLRRVKESVDLFDQLLQGGTAP), 164–199 (SLETTNKLLDLISFYGDREPVRDIQTSEQEQQEVQD), 209–239 (RPRQYRKASEILGSWRENNNAERIFNLMPER), 240–274 (NAHSFCTLIQGMAKFGSSSKAFNIYTDLMNNRLTA), 275–314 (DVQTFNALILAAPDIKEKYNEKWDLIVELLKHMVQQNVRP), 315–351 (NLLTFNSVLKSLRKCGPMAKGLALQTINEMKALNIEP), 352–392 (SLAT…FTLR), 396–430 (DVYFFTNAMRVCLDLKDIELAYRLHTLQQTADNRG), 438–472 (QSTYYGRFFNLLCMMESIDIILKWYRELIPSLYYP), 473–507 (NSRGMLDLLQALDMDNRLDLIPQIWKDIKQIGHSN), and 556–590 (SAGSLGNVSALLARAGKTVEAWKMLQLFKKSHRVP). A disordered region spans residues 187–213 (IQTSEQEQQEVQDQQETEDPKKRPRQY). The segment covering 193–203 (EQQEVQDQQET) has biased composition (acidic residues). The disordered stretch occupies residues 648-670 (EDLQKSHSSSSSSSSSSSDSDRE). Residues 653 to 670 (SHSSSSSSSSSSSDSDRE) are compositionally biased toward low complexity.

It belongs to the mitochondrion-specific ribosomal protein mS39 family.

It is found in the mitochondrion. Functionally, mitochondrial protein that may have a role in mitochondrial translation. In Xenopus tropicalis (Western clawed frog), this protein is Small ribosomal subunit protein mS39 (ptcd3).